The following is a 764-amino-acid chain: FAST kinase domain-containing protein 5, mitochondrial (764 aa).

The N-terminal 27 residues, 1–27 (MAATLKSLKLVRYRAFCSPSAFGAVRS), are a transit peptide targeting the mitochondrion. Residue serine 95 is modified to Phosphoserine. Lysine 507 is subject to N6-acetyllysine. Residues 697-757 (LAVQFTNRNQ…RLEKLAFLHE (61 aa)) form the RAP domain.

This sequence belongs to the FAST kinase family. In terms of assembly, found in a complex with GRSF1, DDX28, DHX30 and FASTKD2. Associates with the 12S mitochondrial rRNA (12S mt-rRNA). In terms of tissue distribution, expression detected in spleen, thymus, testis, ovary, colon, heart, smooth muscle, kidney, brain, lung, liver and white adipose tissue with highest expression in heart, smooth muscle, liver and thyroid.

Its subcellular location is the mitochondrion matrix. It is found in the mitochondrion nucleoid. In terms of biological role, plays an important role in the processing of non-canonical mitochondrial mRNA precursors. This chain is FAST kinase domain-containing protein 5, mitochondrial (FASTKD5), found in Homo sapiens (Human).